The following is a 165-amino-acid chain: Peptide methionine sulfoxide reductase MsrA (165 aa).

The active site involves cysteine 10.

It belongs to the MsrA Met sulfoxide reductase family.

It catalyses the reaction L-methionyl-[protein] + [thioredoxin]-disulfide + H2O = L-methionyl-(S)-S-oxide-[protein] + [thioredoxin]-dithiol. The enzyme catalyses [thioredoxin]-disulfide + L-methionine + H2O = L-methionine (S)-S-oxide + [thioredoxin]-dithiol. In terms of biological role, has an important function as a repair enzyme for proteins that have been inactivated by oxidation. Catalyzes the reversible oxidation-reduction of methionine sulfoxide in proteins to methionine. The chain is Peptide methionine sulfoxide reductase MsrA from Campylobacter jejuni (strain RM1221).